Reading from the N-terminus, the 345-residue chain is Methylthioribose-1-phosphate isomerase (345 aa).

Substrate-binding positions include 44–46 (RGA), arginine 86, and glutamine 194. The active-site Proton donor is aspartate 235. Substrate is bound at residue 245-246 (NK).

This sequence belongs to the eIF-2B alpha/beta/delta subunits family. MtnA subfamily.

The catalysed reaction is 5-(methylsulfanyl)-alpha-D-ribose 1-phosphate = 5-(methylsulfanyl)-D-ribulose 1-phosphate. Its pathway is amino-acid biosynthesis; L-methionine biosynthesis via salvage pathway; L-methionine from S-methyl-5-thio-alpha-D-ribose 1-phosphate: step 1/6. Functionally, catalyzes the interconversion of methylthioribose-1-phosphate (MTR-1-P) into methylthioribulose-1-phosphate (MTRu-1-P). The protein is Methylthioribose-1-phosphate isomerase of Desulfitobacterium hafniense (strain Y51).